A 138-amino-acid chain; its full sequence is Putative pre-16S rRNA nuclease (138 aa).

It belongs to the YqgF nuclease family.

It is found in the cytoplasm. In terms of biological role, could be a nuclease involved in processing of the 5'-end of pre-16S rRNA. This is Putative pre-16S rRNA nuclease from Listeria monocytogenes serovar 1/2a (strain ATCC BAA-679 / EGD-e).